The following is a 337-amino-acid chain: MSQHPLRPAGSRPGDSPPDGSCPDGLAGGGSAVGGGGGGEAGPGAAGADDLVIAGRAYGSRLLIGTGKFASHRVMRDSLVASGATIVTVALRRVDIGRIGDGDVLDFIPPSMTLLPNTSGAVDAAEALRLARLGRAATGTGLVKLEVTPDPRTLAPDPLETLRAAELMVADGFTVLPYCSADPVLARRLEEVGCATVMPLGSWIGSNRGLRTRDAIEAIVASAGVPVVVDAGLGVPSDAAEAMEIGAAAVLVNTAIAVAADPARMARAFALATAAGRLGFLAGRGAAGPATVASASSPLTGFLGAHPSPASHPSPASPVPSVSRATSPAAVVGEASR.

Residues 1–41 form a disordered region; sequence MSQHPLRPAGSRPGDSPPDGSCPDGLAGGGSAVGGGGGGEA. Over residues 10–25 the composition is skewed to low complexity; the sequence is GSRPGDSPPDGSCPDG. Positions 26 to 41 are enriched in gly residues; it reads LAGGGSAVGGGGGGEA. The active-site Schiff-base intermediate with DXP is Lys144. Residues Gly205, 231–232, and 253–254 each bind 1-deoxy-D-xylulose 5-phosphate; these read AG and NT. The interval 302–337 is disordered; that stretch reads FLGAHPSPASHPSPASPVPSVSRATSPAAVVGEASR. The segment covering 319–337 has biased composition (low complexity); sequence VPSVSRATSPAAVVGEASR.

It belongs to the ThiG family. As to quaternary structure, homotetramer. Forms heterodimers with either ThiH or ThiS.

It localises to the cytoplasm. The catalysed reaction is [ThiS sulfur-carrier protein]-C-terminal-Gly-aminoethanethioate + 2-iminoacetate + 1-deoxy-D-xylulose 5-phosphate = [ThiS sulfur-carrier protein]-C-terminal Gly-Gly + 2-[(2R,5Z)-2-carboxy-4-methylthiazol-5(2H)-ylidene]ethyl phosphate + 2 H2O + H(+). Its pathway is cofactor biosynthesis; thiamine diphosphate biosynthesis. In terms of biological role, catalyzes the rearrangement of 1-deoxy-D-xylulose 5-phosphate (DXP) to produce the thiazole phosphate moiety of thiamine. Sulfur is provided by the thiocarboxylate moiety of the carrier protein ThiS. In vitro, sulfur can be provided by H(2)S. The protein is Thiazole synthase of Frankia casuarinae (strain DSM 45818 / CECT 9043 / HFP020203 / CcI3).